A 285-amino-acid chain; its full sequence is MIPWVLLACALPCAADPLLGAFARRDFRKGSPQLVCSLPGPQGPPGPPGAPGPSGMMGRMGFPGKDGQDGHDGDRGDSGEEGPPGRTGNRGKPGPKGKAGAIGRAGPRGPKGVNGTPGKHGTPGKKGPKGKKGEPGLPGPCSCGSGHTKSAFSVAVTKSYPRERLPIKFDKILMNEGGHYNASSGKFVCGVPGIYYFTYDITLANKHLAIGLVHNGQYRIRTFDANTGNHDVASGSTILALKQGDEVWLQIFYSEQNGLFYDPYWTDSLFTGFLIYADQDDPNEV.

Residues 1 to 15 form the signal peptide; that stretch reads MIPWVLLACALPCAA. The disordered stretch occupies residues 33-144; it reads QLVCSLPGPQ…PGLPGPCSCG (112 aa). One can recognise a Collagen-like domain in the interval 40–141; that stretch reads GPQGPPGPPG…KGEPGLPGPC (102 aa). The segment covering 41 to 51 has biased composition (pro residues); the sequence is PQGPPGPPGAP. The span at 53 to 65 shows a compositional bias: low complexity; that stretch reads PSGMMGRMGFPGK. Positions 66-78 are enriched in basic and acidic residues; the sequence is DGQDGHDGDRGDS. Residues 84-120 are compositionally biased toward low complexity; the sequence is PGRTGNRGKPGPKGKAGAIGRAGPRGPKGVNGTPGKH. One can recognise a C1q domain in the interval 145–281; the sequence is SGHTKSAFSV…GFLIYADQDD (137 aa).

In terms of assembly, may interact with ERFE. Expressed in adipose tissue.

Its subcellular location is the secreted. Functionally, involved in the regulation of lipid metabolism in adipose tissue and liver. The sequence is that of Complement C1q tumor necrosis factor-related protein 2 (C1QTNF2) from Homo sapiens (Human).